The chain runs to 567 residues: Malate synthase (567 aa).

Arginine 177 acts as the Proton acceptor in catalysis. Aspartate 466 serves as the catalytic Proton donor. The short motif at 565-567 is the Microbody targeting signal element; sequence CKL.

It belongs to the malate synthase family.

Its subcellular location is the glyoxysome. The catalysed reaction is glyoxylate + acetyl-CoA + H2O = (S)-malate + CoA + H(+). The protein operates within carbohydrate metabolism; glyoxylate cycle; (S)-malate from isocitrate: step 2/2. This Oryza sativa subsp. japonica (Rice) protein is Malate synthase.